The chain runs to 778 residues: Kin of IRRE-like protein 3 (778 aa).

Residues 1–21 form the signal peptide; that stretch reads MRPFQLDLLFLCFFLFSQELG. At 22 to 535 the chain is on the extracellular side; sequence LQKRGCCLVL…GLEAESVPMA (514 aa). Ig-like C2-type domains follow at residues 48-142, 147-243, 249-330, 335-415, and 419-515; these read YSFS…ARLT, PDDP…TSVT, PPLV…RTVD, PRMT…VTLT, and PPII…IRLK. Cys-69 and Cys-127 are joined by a disulfide. N-linked (GlcNAc...) asparagine glycosylation occurs at Asn-167. An intrachain disulfide couples Cys-170 to Cys-227. The N-linked (GlcNAc...) asparagine glycan is linked to Asn-253. Cys-271 and Cys-314 are disulfide-bonded. N-linked (GlcNAc...) asparagine glycosylation is present at Asn-324. Intrachain disulfides connect Cys-356–Cys-398 and Cys-440–Cys-499. N-linked (GlcNAc...) asparagine glycosylation is present at Asn-498. The helical transmembrane segment at 536–556 threads the bilayer; the sequence is VIIGVAVGAGVAFLVLMATIV. At 557–778 the chain is on the cytoplasmic side; that stretch reads AFCCARSQRN…PLQRRMQTHV (222 aa). Positions 727 to 736 are enriched in polar residues; that stretch reads CDSSVSSSGK. The interval 727-778 is disordered; sequence CDSSVSSSGKQDGYVQFDKASKASASSSHHSQSSSQNSDPSRPLQRRMQTHV. Residues 748-762 are compositionally biased toward low complexity; it reads KASASSSHHSQSSSQ.

Belongs to the immunoglobulin superfamily. As to quaternary structure, homodimer; mediates homophilic interactions to promote cell adhesion. Interacts with NPHS1; forms heterodimers with NPHS1. Interacts with NPHS2/podocin (via the C-terminus). Interacts with CASK. Interacts (via extracellular region) with MAP1B. Interacts (via extracellular region) with MYO16. Interacts (via intracellular region) with ATP1B1. Interacts (via intracellular region) with SHMT2. Interacts (via intracellular region) with UFC1. In terms of processing, undergoes proteolysis by a metalloprotease and gives rise to a soluble form. Expressed mainly in adult brain, bone marrow and stromal cells. Expressed in diverse regions of the brain, including the cortex, hippocampus, striatum, olfactory bulb and cerebellum. In brain, expressed in pontine nucleus neurons (at protein level). In hippocampus, produced in both the dentate granule neurons and the GABAergic neurons, but not the CA3 neurons. Expressed in subpopulations of vomeronasal sensory neurons. Expressed in a subset of neurons in dorsal root ganglia.

The protein localises to the cell membrane. It localises to the cell projection. Its subcellular location is the axon. It is found in the dendrite. The protein resides in the secreted. Its function is as follows. Synaptic adhesion molecule required for the formation of target-specific synapses. Required for formation of target-specific synapses at hippocampal mossy fiber synapses. Required for formation of mossy fiber filopodia, the synaptic structures connecting dentate granule and GABA neurons. Probably acts as a homophilic adhesion molecule that promotes trans-cellular interactions and stabilize mossy fiber filipodia contact and subsequent synapse formation. Required for the coalescence of vomeronasal sensory neuron axons. May be involved in the hematopoietic supportive capacity of stroma cells; the secreted extracellular domain is directly responsible for supporting hematopoietic stem cells. This Mus musculus (Mouse) protein is Kin of IRRE-like protein 3 (Kirrel3).